The primary structure comprises 357 residues: Phosphoribosylformylglycinamidine cyclo-ligase (357 aa).

The protein belongs to the AIR synthase family.

The protein resides in the cytoplasm. It catalyses the reaction 2-formamido-N(1)-(5-O-phospho-beta-D-ribosyl)acetamidine + ATP = 5-amino-1-(5-phospho-beta-D-ribosyl)imidazole + ADP + phosphate + H(+). It participates in purine metabolism; IMP biosynthesis via de novo pathway; 5-amino-1-(5-phospho-D-ribosyl)imidazole from N(2)-formyl-N(1)-(5-phospho-D-ribosyl)glycinamide: step 2/2. The polypeptide is Phosphoribosylformylglycinamidine cyclo-ligase (Allorhizobium ampelinum (strain ATCC BAA-846 / DSM 112012 / S4) (Agrobacterium vitis (strain S4))).